The chain runs to 356 residues: Probable neutral protease 2 homolog ARB_04769 (356 aa).

Positions 1-17 (MQFTALLAALGAPLALA) are cleaved as a signal peptide. Positions 18 to 183 (ASIPAAAHNH…DDSTGVIDKR (166 aa)) are excised as a propeptide. 2 disulfide bridges follow: Cys191-Cys262 and Cys269-Cys287. Asn205 is a glycosylation site (N-linked (GlcNAc...) asparagine). His311 is a Zn(2+) binding site. Glu312 is an active-site residue. Zn(2+) is bound by residues His315 and Asp326.

Belongs to the peptidase M35 family. Zn(2+) serves as cofactor.

It localises to the secreted. The enzyme catalyses Preferential cleavage of bonds with hydrophobic residues in P1'. Also 3-Asn-|-Gln-4 and 8-Gly-|-Ser-9 bonds in insulin B chain.. Probable secreted metalloprotease that shows high activities on basic nuclear substrates such as histone and protamine. May be involved in virulence. The polypeptide is Probable neutral protease 2 homolog ARB_04769 (Arthroderma benhamiae (strain ATCC MYA-4681 / CBS 112371) (Trichophyton mentagrophytes)).